Consider the following 856-residue polypeptide: Rod cGMP-specific 3',5'-cyclic phosphodiesterase subunit beta (856 aa).

Position 2 is an N-acetylserine (S2). GAF domains lie at 71–220 (NMER…TLNL) and 252–429 (DIER…GWSV). Residues 481–814 (EEDELGKILK…KEWKALADEY (334 aa)) enclose the PDEase domain. The Proton donor role is filled by H557. 4 residues coordinate a divalent metal cation: H561, H597, D598, and D718. A lipid anchor (S-geranylgeranyl cysteine) is attached at C853. A propeptide spans 854–856 (CIL) (removed in mature form).

This sequence belongs to the cyclic nucleotide phosphodiesterase family. In terms of assembly, oligomer composed of two catalytic chains (alpha and beta), an inhibitory chain (gamma) and the delta chain. The cofactor is a divalent metal cation.

It localises to the membrane. The protein localises to the cell projection. The protein resides in the cilium. It is found in the photoreceptor outer segment. The catalysed reaction is 3',5'-cyclic GMP + H2O = GMP + H(+). Its function is as follows. Rod-specific cGMP phosphodiesterase that catalyzes the hydrolysis of 3',5'-cyclic GMP. Necessary for the formation of a functional phosphodiesterase holoenzyme. Involved in retinal circadian rhythm photoentrainment via modulation of UVA and orange light-induced phase-shift of the retina clock. May participate in processes of transmission and amplification of the visual signal. In Mus musculus (Mouse), this protein is Rod cGMP-specific 3',5'-cyclic phosphodiesterase subunit beta.